A 131-amino-acid polypeptide reads, in one-letter code: Small ribosomal subunit protein uS12 (131 aa).

The interval 1–32 (MPTFSQLVRKGRTAPRYKTASPALQGSPQRRG) is disordered. Asp-89 carries the post-translational modification 3-methylthioaspartic acid. The segment at 110-131 (RKQGRSKYGAKRAKGGAAAGKK) is disordered. Over residues 111 to 131 (KQGRSKYGAKRAKGGAAAGKK) the composition is skewed to basic residues.

It belongs to the universal ribosomal protein uS12 family. Part of the 30S ribosomal subunit. Contacts proteins S8 and S17. May interact with IF1 in the 30S initiation complex.

Its function is as follows. With S4 and S5 plays an important role in translational accuracy. Interacts with and stabilizes bases of the 16S rRNA that are involved in tRNA selection in the A site and with the mRNA backbone. Located at the interface of the 30S and 50S subunits, it traverses the body of the 30S subunit contacting proteins on the other side and probably holding the rRNA structure together. The combined cluster of proteins S8, S12 and S17 appears to hold together the shoulder and platform of the 30S subunit. This chain is Small ribosomal subunit protein uS12, found in Acidobacterium capsulatum (strain ATCC 51196 / DSM 11244 / BCRC 80197 / JCM 7670 / NBRC 15755 / NCIMB 13165 / 161).